A 375-amino-acid polypeptide reads, in one-letter code: MSDTIARPAETARTLPRILPPMAMLAELTHRCPLACPYCSNPIALTQAKEELSTEEWTGVFAQAADLGVLHLHLSGGEPAARRDLVELTQAASSLGLYTNLITSGVGLTEARMNSLADAGLDHIQLSIQGVSPESADRIGGYKGGYERKMAVAGWAADAAIPLTLNAVCHRQNMGEIDEMIELAIRLKARRIEVATVQFHGWAERNKEVLMPTREQVECATRTVAEAREKYQGILVIDYVPADYYSKYPKACMGGWGRVGLNVTPSGRVLPCHAAETIPSLSFENVRENSLSSIWYESNAFNAYRGEDWMPELCRSCERKKVDFGGCRCQAMALAGDASATDPVCIRSPLRDRLTLEVEQLSAPSVVPMNYRGRA.

Residues 18–235 (ILPPMAMLAE…EAREKYQGIL (218 aa)) enclose the Radical SAM core domain. Residues cysteine 32, cysteine 36, and cysteine 39 each contribute to the [4Fe-4S] cluster site.

This sequence belongs to the radical SAM superfamily. PqqE family. Interacts with PqqD. The interaction is necessary for activity of PqqE. [4Fe-4S] cluster is required as a cofactor.

The enzyme catalyses [PQQ precursor protein] + S-adenosyl-L-methionine = E-Y cross-linked-[PQQ precursor protein] + 5'-deoxyadenosine + L-methionine + H(+). The protein operates within cofactor biosynthesis; pyrroloquinoline quinone biosynthesis. Its function is as follows. Catalyzes the cross-linking of a glutamate residue and a tyrosine residue in the PqqA protein as part of the biosynthesis of pyrroloquinoline quinone (PQQ). This Rhizobium meliloti (strain 1021) (Ensifer meliloti) protein is PqqA peptide cyclase.